A 667-amino-acid chain; its full sequence is DNA ligase (667 aa).

NAD(+)-binding positions include 32-36 and 80-81; these read DKDYD and SL. The N6-AMP-lysine intermediate role is filled by Lys-121. Positions 143, 178, and 314 each coordinate NAD(+). Zn(2+)-binding residues include Cys-407, Cys-410, Cys-423, and Cys-429. The BRCT domain maps to 587 to 667; it reads IVESIFKDKT…EFEKMLGRES (81 aa).

Belongs to the NAD-dependent DNA ligase family. LigA subfamily. The cofactor is Mg(2+). It depends on Mn(2+) as a cofactor.

The catalysed reaction is NAD(+) + (deoxyribonucleotide)n-3'-hydroxyl + 5'-phospho-(deoxyribonucleotide)m = (deoxyribonucleotide)n+m + AMP + beta-nicotinamide D-nucleotide.. DNA ligase that catalyzes the formation of phosphodiester linkages between 5'-phosphoryl and 3'-hydroxyl groups in double-stranded DNA using NAD as a coenzyme and as the energy source for the reaction. It is essential for DNA replication and repair of damaged DNA. This Clostridium botulinum (strain Eklund 17B / Type B) protein is DNA ligase.